The sequence spans 286 residues: Short-chain dehydrogenase fogD (286 aa).

Residues valine 8, threonine 34, aspartate 55, tyrosine 147, lysine 151, valine 180, and threonine 182 each contribute to the NADP(+) site. Tyrosine 147 serves as the catalytic Proton acceptor. Catalysis depends on lysine 151, which acts as the Lowers pKa of active site Tyr.

It belongs to the short-chain dehydrogenases/reductases (SDR) family.

Its pathway is secondary metabolite biosynthesis. In terms of biological role, short-chain dehydrogenase; part of the gene cluster that mediates the biosynthesis of flavoglaucin and congeners (including aspergin, dihydroauroglaucin and auroglaucin), prenylated salicylaldehyde derivatives carrying a saturated or an unsaturated C-7 side chain. The PKS fogA releases the carboxylic acid (8E,10E,12E)-3,5,7-trihydroxytetradeca-8,10,12-trienoic acid as its product, as well as derivatives with one and two double bonds. FogA is indeed able to reduce the initial triketide, thus being at least partially responsible for the differently saturated heptyl side chains of flavoglaucin congeners. The oxidoreductases fogB, fogC and fogD modify the nascent polyketide in fogA-bound form and, together, fogA, fogB, fogC and fogD are necessary for the formation of the aromatic core and the cyclized PKS products are released as salicyl alcohols. In particular, fogB is responsible for oxidation of a hydroxyl group or reduction of remaining double bond(s) at the C-7 residue whereas fogD is probably involved in the reductive release of the modified PKS products. The cytochrome P450 monooxygenase fogE is then responsible for the hydroxylation at C-3 of the benzene ring. The fogE products are substrates of the prenyltransferase fogH and the prenylated benzyl alcohols are subsequently oxidized by the fogF to produce the final aryl aldehydes flavoglaucin and congeners. The short-chain dehydrogenase fogG does not seem to be involved in the biosynthesis of the prenylated salicylaldehyde derivatives. This is Short-chain dehydrogenase fogD from Aspergillus ruber (strain CBS 135680).